The sequence spans 141 residues: MGRVRTKTVKKSSRQVIEKYYSRMTLDFHTNKKILEEVAIIPSKRLRNKIAGFSTHLMKRIQKGPVRGISLKLQEEERERRMDFVPDESAIKTDEIKVDKETLEMLASLGMSDTLGISAVDPQQAMAPIPAFGGGRAPRRY.

It belongs to the eukaryotic ribosomal protein eS17 family.

The polypeptide is Small ribosomal subunit protein eS17z (RPS17A) (Arabidopsis thaliana (Mouse-ear cress)).